The chain runs to 309 residues: Serine/threonine-protein phosphatase 2A catalytic subunit alpha isoform (309 aa).

Mn(2+) is bound by residues D57, H59, D85, and N117. Zn(2+) contacts are provided by D57, H59, and D85. Fe(3+) contacts are provided by D85 and N117. The active-site Proton donor is H118. Mn(2+) contacts are provided by H167 and H241. Residues H167 and H241 each contribute to the Fe(3+) site. A Phosphotyrosine modification is found at Y307. Leucine methyl ester is present on L309.

Belongs to the PPP phosphatase family. PP-1 subfamily. In terms of assembly, PP2A consists of a common heterodimeric core enzyme, composed of PPP2CA, a 36 kDa catalytic subunit (subunit C), and PPP2R1A, a 65 kDa constant regulatory subunit (PR65 or subunit A), that associates with a variety of regulatory subunits. Proteins that associate with the core dimer include three families of regulatory subunits B (the R2/B/PR55/B55, R3/B''/PR72/PR130/PR59 and R5/B'/B56 families), the 48 kDa variable regulatory subunit, viral proteins, and cell signaling molecules. May indirectly interact with SGOL1, most probably through regulatory B56 subunits. Phosphatase component of the Integrator-PP2A (INTAC) complex, composed of the Integrator core complex and protein phosphatase 2A subunits PPP2CA and PPP2R1A. Requires Mn(2+) as cofactor. Fe(3+) is required as a cofactor. It depends on Zn(2+) as a cofactor. Post-translationally, reversibly methyl esterified on Leu-309 by leucine carboxyl methyltransferase 1 (LCMT1) and protein phosphatase methylesterase 1 (PPME1). Carboxyl methylation influences the affinity of the catalytic subunit for the different regulatory subunits, thereby modulating the PP2A holoenzyme's substrate specificity, enzyme activity and cellular localization. In terms of processing, phosphorylation of either threonine (by autophosphorylation-activated protein kinase) or tyrosine results in inactivation of the phosphatase. Auto-dephosphorylation has been suggested as a mechanism for reactivation.

The protein resides in the cytoplasm. It localises to the nucleus. Its subcellular location is the chromosome. The protein localises to the centromere. It is found in the cytoskeleton. The protein resides in the spindle pole. The catalysed reaction is O-phospho-L-seryl-[protein] + H2O = L-seryl-[protein] + phosphate. It catalyses the reaction O-phospho-L-threonyl-[protein] + H2O = L-threonyl-[protein] + phosphate. Inhibited by the interaction between PPP2R2A and ARPP19; this inhibition is enhanced when ARPP19 is phosphorylated. Inhibited by the interaction between PPP2R2A and PABIR1/FAM122A. In terms of biological role, PP2A is the major phosphatase for microtubule-associated proteins (MAPs). PP2A can modulate the activity of phosphorylase B kinase casein kinase 2, mitogen-stimulated S6 kinase, and MAP-2 kinase. Key mediator of a quality checkpoint during transcription elongation as part of the Integrator-PP2A (INTAC) complex. The INTAC complex drives premature transcription termination of transcripts that are unfavorably configured for transcriptional elongation: within the INTAC complex, PPP2CA catalyzes dephosphorylation of the C-terminal domain (CTD) of Pol II subunit POLR2A/RPB1 and SUPT5H/SPT5, thereby preventing transcriptional elongation. The polypeptide is Serine/threonine-protein phosphatase 2A catalytic subunit alpha isoform (PPP2CA) (Gallus gallus (Chicken)).